The sequence spans 159 residues: NADH-quinone oxidoreductase subunit B (159 aa).

Cysteine 32, cysteine 33, cysteine 97, and cysteine 126 together coordinate [4Fe-4S] cluster.

The protein belongs to the complex I 20 kDa subunit family. In terms of assembly, NDH-1 is composed of 14 different subunits. Subunits NuoB, C, D, E, F, and G constitute the peripheral sector of the complex. [4Fe-4S] cluster is required as a cofactor.

The protein localises to the cell inner membrane. The catalysed reaction is a quinone + NADH + 5 H(+)(in) = a quinol + NAD(+) + 4 H(+)(out). In terms of biological role, NDH-1 shuttles electrons from NADH, via FMN and iron-sulfur (Fe-S) centers, to quinones in the respiratory chain. The immediate electron acceptor for the enzyme in this species is believed to be ubiquinone. Couples the redox reaction to proton translocation (for every two electrons transferred, four hydrogen ions are translocated across the cytoplasmic membrane), and thus conserves the redox energy in a proton gradient. The chain is NADH-quinone oxidoreductase subunit B from Helicobacter pylori (strain HPAG1).